The chain runs to 84 residues: Glutaredoxin (84 aa).

A Glutaredoxin domain is found at 1–84 (MPPVVIYTTA…AGKLDALLSA (84 aa)). Cys-12 and Cys-15 are oxidised to a cystine.

The protein belongs to the glutaredoxin family. As to quaternary structure, monomer.

The protein localises to the cytoplasm. Has a glutathione-disulfide oxidoreductase activity in the presence of NADPH and glutathione reductase. Reduces low molecular weight disulfides and proteins. This chain is Glutaredoxin (grx), found in Pseudomonas aeruginosa (strain ATCC 15692 / DSM 22644 / CIP 104116 / JCM 14847 / LMG 12228 / 1C / PRS 101 / PAO1).